The primary structure comprises 571 residues: Acetolactate synthase large subunit (571 aa).

Glu-51 lines the thiamine diphosphate pocket. Residues Arg-153, 261–282 (HGTY…IGVR), and 304–323 (DIDP…IVGD) contribute to the FAD site. Residues 394–474 (QHQMFTALYY…VLILNLNNSS (81 aa)) are thiamine pyrophosphate binding. Mg(2+) contacts are provided by Asp-445 and Asn-472.

The protein belongs to the TPP enzyme family. In terms of assembly, dimer of large and small chains. Mg(2+) serves as cofactor. The cofactor is thiamine diphosphate.

It carries out the reaction 2 pyruvate + H(+) = (2S)-2-acetolactate + CO2. It participates in amino-acid biosynthesis; L-isoleucine biosynthesis; L-isoleucine from 2-oxobutanoate: step 1/4. It functions in the pathway amino-acid biosynthesis; L-valine biosynthesis; L-valine from pyruvate: step 1/4. This Buchnera aphidicola subsp. Schizaphis graminum (strain Sg) protein is Acetolactate synthase large subunit (ilvI).